The following is a 90-amino-acid chain: Elongation factor 1-beta (90 aa).

The protein belongs to the EF-1-beta/EF-1-delta family.

Its function is as follows. Promotes the exchange of GDP for GTP in EF-1-alpha/GDP, thus allowing the regeneration of EF-1-alpha/GTP that could then be used to form the ternary complex EF-1-alpha/GTP/AAtRNA. The chain is Elongation factor 1-beta (ef1b) from Aeropyrum pernix (strain ATCC 700893 / DSM 11879 / JCM 9820 / NBRC 100138 / K1).